Consider the following 489-residue polypeptide: Aspartate/glutamate permease AcaP (489 aa).

12 helical membrane-spanning segments follow: residues 6–26, 36–56, 91–111, 122–142, 152–172, 195–215, 238–258, 290–310, 342–362, 373–393, 413–433, and 449–469; these read IRWFTVAFIAFNMVWGMGNVV, VVTSWLLILALYFIPYALIVG, VVHIPYLAQKPQAILIAFGWV, MSMTAVALISLAIFLAFLWLS, IGGLAGTAMFVMSLLFIVMAI, IPKFDFSYFTTISMLVFAVGG, FLLAGMVGICAVLGSIAMGMI, LMIVYALTNGVGQIAALAFSI, GYTLTGILVSIIILLPLLGIG, NLNSVVMPMRYLWVFFAFIML, AMIAGAWCFLFTLIACVLGMV, and LASNILTPIVLILLGMLLPFI.

Belongs to the amino acid-polyamine-organocation (APC) superfamily. Glutamate:GABA antiporter (GGA) (TC 2.A.3.7) family.

The protein localises to the cell membrane. Involved in aspartate and glutamate uptake. Plays no significant role in the excretion of accumulated glutamate. The protein is Aspartate/glutamate permease AcaP of Lactococcus lactis subsp. cremoris (strain MG1363).